The primary structure comprises 176 residues: Large ribosomal subunit protein uL5 (176 aa).

The protein belongs to the universal ribosomal protein uL5 family. Part of the 50S ribosomal subunit; contacts the 5S rRNA and probably tRNA. Forms a bridge to the 30S subunit in the 70S ribosome.

Functionally, this is one of the proteins that bind and probably mediate the attachment of the 5S RNA into the large ribosomal subunit, where it forms part of the central protuberance. In the 70S ribosome it contacts protein S13 of the 30S subunit (bridge B1b), connecting the 2 subunits; this bridge is implicated in subunit movement. May contact the P site tRNA; the 5S rRNA and some of its associated proteins might help stabilize positioning of ribosome-bound tRNAs. The chain is Large ribosomal subunit protein uL5 from Picrophilus torridus (strain ATCC 700027 / DSM 9790 / JCM 10055 / NBRC 100828 / KAW 2/3).